The primary structure comprises 98 residues: mRNA interferase toxin MqsR (98 aa).

In terms of assembly, might be a dimer. Also reported to be a monomer. Crystallizes as a heterotetramer with MqsA, MqsR-MqsA(2)-MqsR. Purifies as a possible heterohexamer of 2 MqsR dimers and 1 MqsA dimer. When the 2 dissociate the MsqR mRNA interferase becomes active.

In terms of biological role, toxic component of a type II toxin-antitoxin (TA) system. Plays a significant role in the control of biofilm formation and induction of persister cells in the presence of antibiotics. An mRNA interferase which has been reported to be translation-independent. It has also been reported to be translation-dependent. Cleavage has been reported to occur on either side of G in the sequence GCU. Also reported to cleave after C in GC(A/U) sequences. There are only 14 genes in E.coli W3110 (and probably also MG1655) that do not have a GCU sequence and thus are resistant to the mRNA interferase activity; among these is the gene for toxin GhoT. Overexpression of MqsR causes cessation of cell growth and inhibits cell proliferation via inhibition of translation as well as increasing persister cell formation; these effects are overcome by concomitant or subsequent expression of antitoxin MqsA. Cross-talk can occur between different TA systems. Ectopic expression of this toxin induces transcription of the relBEF TA system operon with specific cleavage of the relBEF mRNA produced. Regulates the expression of GhoT/GhoS, a type V TA system. Persistence depends on toxin GhoT activity, which MqsR controls at the post-transcriptional level by selectively degrading the antitoxin ghoS segment of the ghoST mRNA. Overexpression leads to a dramatic increase in tolerance to the antibiotic ofloxacin. This TA system mediates cell growth during bile acid deoxycholate stress by degrading mRNA for probable deoxycholate-binding protein YgiS; bile acid detergents such as deoxycholate are important for host defense against bacterial growth in the gall bladder and duodenum. Functionally, initially reported to act as a cotranscription factor with MqsA. Following further experiments, the MqsR-MqsA complex does not bind DNA and all reported data are actually due to a small fraction of free MqsA alone binding DNA. Addition of MqsR to a preformed MqsA-promoter DNA complex causes dissociation of the MqsA-DNA complex, probably causing derepression of MqsA-repressed transcripts. Does not bind DNA in the presence or absence of MqsA. The sequence is that of mRNA interferase toxin MqsR from Escherichia coli (strain K12).